A 364-amino-acid polypeptide reads, in one-letter code: Coproporphyrin III ferrochelatase (364 aa).

Fe-coproporphyrin III is bound by residues Arg-29 and Tyr-118. Residues His-169 and Glu-250 each coordinate Fe(2+).

Belongs to the ferrochelatase family.

It is found in the cytoplasm. It carries out the reaction Fe-coproporphyrin III + 2 H(+) = coproporphyrin III + Fe(2+). Its pathway is porphyrin-containing compound metabolism; protoheme biosynthesis. Its function is as follows. Involved in coproporphyrin-dependent heme b biosynthesis. Catalyzes the insertion of ferrous iron into coproporphyrin III to form Fe-coproporphyrin III. This is Coproporphyrin III ferrochelatase from Streptococcus pneumoniae serotype 4 (strain ATCC BAA-334 / TIGR4).